The chain runs to 428 residues: Phosphoribosylamine--glycine ligase (428 aa).

The ATP-grasp domain occupies 107-313 (KQVMKTYNIP…LVNVIESLLD (207 aa)). 133-194 (VEAEGVPIVI…EEYLEGEELS (62 aa)) is a binding site for ATP. 2 residues coordinate Mg(2+): E283 and N285.

The protein belongs to the GARS family. The cofactor is Mg(2+). It depends on Mn(2+) as a cofactor.

The catalysed reaction is 5-phospho-beta-D-ribosylamine + glycine + ATP = N(1)-(5-phospho-beta-D-ribosyl)glycinamide + ADP + phosphate + H(+). It functions in the pathway purine metabolism; IMP biosynthesis via de novo pathway; N(1)-(5-phospho-D-ribosyl)glycinamide from 5-phospho-alpha-D-ribose 1-diphosphate: step 2/2. This is Phosphoribosylamine--glycine ligase from Halalkalibacterium halodurans (strain ATCC BAA-125 / DSM 18197 / FERM 7344 / JCM 9153 / C-125) (Bacillus halodurans).